The chain runs to 492 residues: Probable G-protein coupled receptor Mth-like 8 (492 aa).

Residues 1-21 (MAQFCILGVLLILSGTHCSWG) form the signal peptide. Residues 22–218 (FHEETHYPCA…FVLGVREWTY (197 aa)) lie on the Extracellular side of the membrane. Disulfide bonds link cysteine 30–cysteine 82, cysteine 84–cysteine 89, cysteine 93–cysteine 184, and cysteine 94–cysteine 107. N-linked (GlcNAc...) asparagine glycans are attached at residues asparagine 37 and asparagine 51. Residues asparagine 129, asparagine 169, and asparagine 192 are each glycosylated (N-linked (GlcNAc...) asparagine). A helical membrane pass occupies residues 219–239 (AICLLIAILSMFIVLMVYLMC). Over 240-245 (SEMRNS) the chain is Cytoplasmic. The chain crosses the membrane as a helical span at residues 246-266 (FYGVAIKAYAICMILGYALLA). The Extracellular portion of the chain corresponds to 267–282 (YLTLHNPANLSNAACR). Asparagine 275 carries an N-linked (GlcNAc...) asparagine glycan. Residues 283–303 (ILPSLALMNLVLSFYILSFIA) form a helical membrane-spanning segment. Residues 304 to 317 (FKLYLSFYGVVFTK) are Cytoplasmic-facing. A helical membrane pass occupies residues 318-338 (LMFWLIFTPIVLVAVGWSFFV). The Extracellular segment spans residues 339–362 (GFSYYGSRLIFGGDTCWFDPRNWS). Asparagine 360 carries N-linked (GlcNAc...) asparagine glycosylation. The helical transmembrane segment at 363–383 (VMIYFYAPVFVACAISGFFYV) threads the bilayer. Topologically, residues 384 to 411 (LSQIYIRDQPDIETEKSFESIEKNRFKS) are cytoplasmic. A helical transmembrane segment spans residues 412–432 (FWKYFGYTAVVWVVCICSFAF). At 433-441 (NYYWENRSH) the chain is on the extracellular side. Asparagine 438 is a glycosylation site (N-linked (GlcNAc...) asparagine). Residues 442 to 462 (LNYAVSFCMAFHGFAALYALI) traverse the membrane as a helical segment. Residues 463-492 (GKNQQIQNFLRRIDNGEDTCENSVPLSSFG) lie on the Cytoplasmic side of the membrane.

The protein belongs to the G-protein coupled receptor 2 family. Mth subfamily.

The protein localises to the cell membrane. This Drosophila melanogaster (Fruit fly) protein is Probable G-protein coupled receptor Mth-like 8 (mthl8).